The primary structure comprises 577 residues: Arginine--tRNA ligase (577 aa).

The short motif at 122 to 132 (PNVAKEMHVGH) is the 'HIGH' region element.

It belongs to the class-I aminoacyl-tRNA synthetase family. As to quaternary structure, monomer.

It is found in the cytoplasm. It carries out the reaction tRNA(Arg) + L-arginine + ATP = L-arginyl-tRNA(Arg) + AMP + diphosphate. The protein is Arginine--tRNA ligase of Salmonella schwarzengrund (strain CVM19633).